The sequence spans 636 residues: 1-deoxy-D-xylulose-5-phosphate synthase (636 aa).

Thiamine diphosphate is bound by residues His-72 and 113–115 (GHA). Asp-144 provides a ligand contact to Mg(2+). Thiamine diphosphate-binding positions include 145–146 (GS), Asn-174, Tyr-287, and Glu-370. Asn-174 provides a ligand contact to Mg(2+).

The protein belongs to the transketolase family. DXPS subfamily. In terms of assembly, homodimer. Mg(2+) is required as a cofactor. Thiamine diphosphate serves as cofactor.

The catalysed reaction is D-glyceraldehyde 3-phosphate + pyruvate + H(+) = 1-deoxy-D-xylulose 5-phosphate + CO2. It participates in metabolic intermediate biosynthesis; 1-deoxy-D-xylulose 5-phosphate biosynthesis; 1-deoxy-D-xylulose 5-phosphate from D-glyceraldehyde 3-phosphate and pyruvate: step 1/1. Its function is as follows. Catalyzes the acyloin condensation reaction between C atoms 2 and 3 of pyruvate and glyceraldehyde 3-phosphate to yield 1-deoxy-D-xylulose-5-phosphate (DXP). This Synechococcus sp. (strain ATCC 27144 / PCC 6301 / SAUG 1402/1) (Anacystis nidulans) protein is 1-deoxy-D-xylulose-5-phosphate synthase.